The sequence spans 117 residues: Large ribosomal subunit protein bL20c (117 aa).

This sequence belongs to the bacterial ribosomal protein bL20 family.

The protein localises to the plastid. Its subcellular location is the chloroplast. Its function is as follows. Binds directly to 23S ribosomal RNA and is necessary for the in vitro assembly process of the 50S ribosomal subunit. It is not involved in the protein synthesizing functions of that subunit. This is Large ribosomal subunit protein bL20c from Acorus gramineus (Dwarf sweet flag).